A 681-amino-acid polypeptide reads, in one-letter code: UvrABC system protein C (681 aa).

The segment at 1–23 (MNGKKLPDGGILFDETDDEDDDA) is disordered. Over residues 14–23 (DETDDEDDDA) the composition is skewed to acidic residues. The 79-residue stretch at 67–145 (NSPGVYRMFN…IKRLRPRFNV (79 aa)) folds into the GIY-YIG domain. In terms of domain architecture, UVR spans 255–290 (QAVKTAIARQMNEASEDLDFERAAIYRDRLAALSHV).

It belongs to the UvrC family. As to quaternary structure, interacts with UvrB in an incision complex.

The protein localises to the cytoplasm. Its function is as follows. The UvrABC repair system catalyzes the recognition and processing of DNA lesions. UvrC both incises the 5' and 3' sides of the lesion. The N-terminal half is responsible for the 3' incision and the C-terminal half is responsible for the 5' incision. This chain is UvrABC system protein C, found in Agrobacterium fabrum (strain C58 / ATCC 33970) (Agrobacterium tumefaciens (strain C58)).